A 388-amino-acid polypeptide reads, in one-letter code: Lipid-A-disaccharide synthase (388 aa).

It belongs to the LpxB family.

The catalysed reaction is a lipid X + a UDP-2-N,3-O-bis[(3R)-3-hydroxyacyl]-alpha-D-glucosamine = a lipid A disaccharide + UDP + H(+). It participates in bacterial outer membrane biogenesis; LPS lipid A biosynthesis. In terms of biological role, condensation of UDP-2,3-diacylglucosamine and 2,3-diacylglucosamine-1-phosphate to form lipid A disaccharide, a precursor of lipid A, a phosphorylated glycolipid that anchors the lipopolysaccharide to the outer membrane of the cell. The chain is Lipid-A-disaccharide synthase from Burkholderia mallei (strain NCTC 10247).